We begin with the raw amino-acid sequence, 463 residues long: Siroheme synthase (463 aa).

Residues 1–203 (MDYLPLFHKL…GQGAEAERLL (203 aa)) form a precorrin-2 dehydrogenase /sirohydrochlorin ferrochelatase region. Residues 22–23 (EI) and 43–44 (PD) each bind NAD(+). Serine 128 carries the phosphoserine modification. Residues 216–463 (GEVYLVGAGP…LAWFEGSQNS (248 aa)) are uroporphyrinogen-III C-methyltransferase. Proline 225 is an S-adenosyl-L-methionine binding site. Aspartate 248 acts as the Proton acceptor in catalysis. Catalysis depends on lysine 270, which acts as the Proton donor. S-adenosyl-L-methionine-binding positions include 301–303 (GGD), isoleucine 306, 331–332 (TA), methionine 383, and glycine 412.

The protein in the N-terminal section; belongs to the precorrin-2 dehydrogenase / sirohydrochlorin ferrochelatase family. This sequence in the C-terminal section; belongs to the precorrin methyltransferase family.

The catalysed reaction is uroporphyrinogen III + 2 S-adenosyl-L-methionine = precorrin-2 + 2 S-adenosyl-L-homocysteine + H(+). It carries out the reaction precorrin-2 + NAD(+) = sirohydrochlorin + NADH + 2 H(+). The enzyme catalyses siroheme + 2 H(+) = sirohydrochlorin + Fe(2+). The protein operates within cofactor biosynthesis; adenosylcobalamin biosynthesis; precorrin-2 from uroporphyrinogen III: step 1/1. Its pathway is cofactor biosynthesis; adenosylcobalamin biosynthesis; sirohydrochlorin from precorrin-2: step 1/1. It participates in porphyrin-containing compound metabolism; siroheme biosynthesis; precorrin-2 from uroporphyrinogen III: step 1/1. It functions in the pathway porphyrin-containing compound metabolism; siroheme biosynthesis; siroheme from sirohydrochlorin: step 1/1. The protein operates within porphyrin-containing compound metabolism; siroheme biosynthesis; sirohydrochlorin from precorrin-2: step 1/1. Multifunctional enzyme that catalyzes the SAM-dependent methylations of uroporphyrinogen III at position C-2 and C-7 to form precorrin-2 via precorrin-1. Then it catalyzes the NAD-dependent ring dehydrogenation of precorrin-2 to yield sirohydrochlorin. Finally, it catalyzes the ferrochelation of sirohydrochlorin to yield siroheme. The chain is Siroheme synthase from Pseudomonas putida (strain ATCC 700007 / DSM 6899 / JCM 31910 / BCRC 17059 / LMG 24140 / F1).